A 79-amino-acid polypeptide reads, in one-letter code: Hematopoietic cell signal transducer (79 aa).

The N-terminal stretch at 1-18 (MAPPGHLLFLFLLPVAAS) is a signal peptide. The Extracellular segment spans residues 19-35 (QTNEGSCSGCGPLSLPL). The chain crosses the membrane as a helical span at residues 36–56 (LAGLVAADAVMSLLIVGVVFV). Over 57–79 (CMRLHSRPAQEDGRVYINMPGRG) the chain is Cytoplasmic. Residue tyrosine 72 is modified to Phosphotyrosine. The interval 72 to 74 (YIN) is GRB2 binding site. A PIK3R1 binding site region spans residues 72-75 (YINM).

This sequence belongs to the DAP10 family. In terms of assembly, homodimer; Disulfide-linked. Heterohexamer composed of four subunits of HCST/DAP10 and two subunits of KLRK1. Interacts (via transmembrane domain) with KLRK1 (via transmembrane domain); the interaction is required for KLRK1 NK cell surface and induces NK cell-mediated cytotoxicity. Interacts with PIK3R1 and GRB2. Interacts with CLEC5A. Forms an CLEC5A/TYROBP/HCST trimolecular complex depending almost solely on TYROBP. Interacts with CD300H. In terms of processing, phosphorylated; PIK3R1 and GRB2 associate specifically with tyrosine-phosphorylated HCST. Post-translationally, O-glycosylated.

The protein localises to the membrane. Transmembrane adapter protein which associates with KLRK1 to form an activation receptor KLRK1-HCST in lymphoid and myeloid cells; this receptor plays a major role in triggering cytotoxicity against target cells expressing cell surface ligands such as MHC class I chain-related MICA and MICB, and UL16-binding proteins (ULBPs); these ligands are up-regulated by stress conditions and pathological state such as viral infection and tumor transformation. Functions as a docking site for PI3-kinase PIK3R1 and GRB2. Interaction of ULBPs with KLRK1-HCST triggers calcium mobilization and activation of the PIK3R1, MAP2K/ERK, and JAK2/STAT5 signaling pathways. Both PIK3R1 and GRB2 are required for full KLRK1-HCST-mediated activation and ultimate killing of target cells. In NK cells, KLRK1-HCST signaling directly induces cytotoxicity and enhances cytokine production initiated via DAP12/TYROBP-associated receptors. In T-cells, it provides primarily costimulation for TCR-induced signals. KLRK1-HCST receptor plays a role in immune surveillance against tumors and is required for cytolysis of tumors cells; indeed, melanoma cells that do not express KLRK1 ligands escape from immune surveillance mediated by NK cells. The chain is Hematopoietic cell signal transducer (Hcst) from Rattus norvegicus (Rat).